A 337-amino-acid polypeptide reads, in one-letter code: D-lactate dehydrogenase (337 aa).

Residues 156 to 157 (HI), aspartate 176, 207 to 208 (VP), asparagine 213, 234 to 236 (CSR), and aspartate 260 contribute to the NAD(+) site. Residue arginine 236 is part of the active site. Glutamate 265 is a catalytic residue. Histidine 297 (proton donor) is an active-site residue.

Belongs to the D-isomer specific 2-hydroxyacid dehydrogenase family. In terms of assembly, homodimer.

It carries out the reaction (R)-lactate + NAD(+) = pyruvate + NADH + H(+). The chain is D-lactate dehydrogenase from Lactobacillus helveticus (Lactobacillus suntoryeus).